Here is a 1181-residue protein sequence, read N- to C-terminus: C5a peptidase (1181 aa).

The N-terminal stretch at Met-1–Ala-31 is a signal peptide. Over residues Thr-33–Ala-52 the composition is skewed to polar residues. Residues Thr-33–Lys-117 are disordered. The span at Asp-70 to Asn-81 shows a compositional bias: acidic residues. Residues Lys-99 to Ser-581 form the Peptidase S8 domain. Active-site charge relay system residues include Asp-130, His-193, and Ser-512. Basic and acidic residues-rich tracts occupy residues Glu-1029–Gln-1054, Pro-1061–Gln-1071, Pro-1078–Gln-1088, and Pro-1095–Ser-1107. Residues Glu-1029 to Lys-1150 form a disordered region. Tandem repeats lie at residues Lys-1034–Thr-1050, Lys-1051–Thr-1067, Lys-1068–Thr-1084, Lys-1085–Thr-1101, and Lys-1102–Lys-1118. A 5 X 17 AA tandem repeats region spans residues Lys-1034–Lys-1118. Polar residues-rich tracts occupy residues Gly-1109–Arg-1123 and Lys-1137–Thr-1147. The LPXTG sorting signal motif lies at Leu-1144–Asn-1148. Thr-1147 bears the Pentaglycyl murein peptidoglycan amidated threonine mark. Residues Asn-1148 to Asp-1181 constitute a propeptide, removed by sortase.

This sequence belongs to the peptidase S8 family. In terms of processing, cleaved by SpeB protease; leading to its degradation. Degradation by SpeB is probably strictly regulated to preserve integrity of C5a peptidase.

It is found in the secreted. Its subcellular location is the cell wall. It catalyses the reaction The primary cleavage site is at 67-His-|-Lys-68 in human C5a with a minor secondary cleavage site at 58-Ala-|-Ser-59.. Functionally, this virulence factor of S.pyogenes specifically cleaves the human serum chemotaxin C5a at '68-Lys-|-Asp-69' bond near its C-terminus, destroying its ability to serve as a chemoattractant. The chain is C5a peptidase (scpA) from Streptococcus pyogenes serotype M1.